Here is a 142-residue protein sequence, read N- to C-terminus: Ornithine decarboxylase antizyme (142 aa).

Low complexity predominate over residues 1–19 (MSSSIVLSNNNSNSNSMSM). The interval 1 to 34 (MSSSIVLSNNNSNSNSMSMIGQSPPCCSDVPNTP) is disordered.

This sequence belongs to the ODC antizyme family. Interacts with ODC1 and thereby sterically blocks ODC homodimerization.

Functionally, ornithine decarboxylase (ODC) antizyme protein that negatively regulates ODC activity and intracellular polyamine biosynthesis and uptake in response to increased intracellular polyamine levels. Binds to ODC monomers, inhibiting the assembly of the functional ODC homodimer, and targets the monomers for ubiquitin-independent proteolytic destruction by the 26S proteasome. The protein is Ornithine decarboxylase antizyme of Pristionchus pacificus (Parasitic nematode).